The following is a 353-amino-acid chain: UPF0283 membrane protein YcjF (353 aa).

The segment covering Met-1–Ser-19 has biased composition (basic and acidic residues). The interval Met-1 to Phe-29 is disordered. A compositionally biased stretch (polar residues) spans Thr-20–Phe-29. The next 3 membrane-spanning stretches (helical) occupy residues Met-70–Thr-90, Ala-100–Ile-120, and Glu-213–Trp-233.

This sequence belongs to the UPF0283 family.

It is found in the cell inner membrane. This is UPF0283 membrane protein YcjF from Salmonella arizonae (strain ATCC BAA-731 / CDC346-86 / RSK2980).